The primary structure comprises 197 residues: RNA-binding protein with multiple splicing (197 aa).

An N-acetylmethionine modification is found at Met1. Thr12 is subject to Phosphothreonine. One can recognise an RRM domain in the interval 24-101; the sequence is RTLFVSGLPL…QTLRLEFAKA (78 aa). Positions 98 to 105 are interaction with RNA; that stretch reads FAKANTKM. Phosphothreonine is present on Thr113.

Homodimer; each protein chain binds one RNA molecule via the external surface of the homodimer. Interacts with RNA binding proteins MBNL1, RBFOX2, RBM4 and RBM14; the interaction allows cooperative assembly of stable cell-specific alternative splicing regulatory complexes. Also interacts with RBM47, MATR3 and ESRP2. Interacts with SMAD2, SMAD3 and SMAD4; the interactions are direct. As to expression, mRNA expressed in developing heart, with significantly higher expression in the atria relative to the ventricles.

It localises to the nucleus. The protein localises to the cytoplasm. The protein resides in the stress granule. Its subcellular location is the P-body. In terms of biological role, RNA binding protein that mediates the regulation of pre-mRNA alternative splicing (AS). Acts either as activator (FLNB, HSPG2, LIPA1, MYOCD, PTPRF and PPFIBP1) or repressor (TPM1, ACTN1, ITGA7, PIEZO1, LSM14B, MBNL1 and MBML2) of splicing events on specific pre-mRNA targets. Together with RNA binding proteins RBFOX2 and MBNL1/2, activates a splicing program associated with differentiated contractile vascular smooth muscle cells (SMC) by regulating AS of numerous pre-mRNA involved in actin cytoskeleton and focal adhesion machineries, suggesting a role in promoting a cell differentiated state. Binds to introns, exons and 3'-UTR associated with tandem CAC trinucleotide motifs separated by a variable spacer region, at a minimum as a dimer. The minimal length of RNA required for RBPMS-binding tandem CAC motifs is 15 nt, with spacing ranging from 1 to 9 nt. Can also bind to CA dinucleotide repeats. Mediates repression of TPM1 exon 3 by binding to CAC tandem repeats in the flanking intronic regions, followed by higher-order oligomerization and heterotypic interactions with other splicing regulators including MBNL1 and RBFOX2, which prevents assembly of ATP-dependent splicing complexes. The sequence is that of RNA-binding protein with multiple splicing from Mus musculus (Mouse).